A 224-amino-acid polypeptide reads, in one-letter code: CRP-like cAMP-activated global transcriptional regulator (224 aa).

Residues 64–70, 79–82, 89–90, 134–135, 142–143, and 178–188 each bind 3',5'-cyclic AMP; these read GRENLLT, GELS, RT, TN, IF, and EEIAQLVGASR. Residues 144 to 217 form the HTH crp-type domain; that stretch reads TDVPGRVAKQ…GKSVLISDSE (74 aa). A DNA-binding region (H-T-H motif) is located at residues 177–196; that stretch reads QEEIAQLVGASRETVNKALA.

Homodimer.

In terms of biological role, global transcriptional regulator that complexes with cAMP and binds to specific DNA promoter sites, causing DNA-bending, to regulate transcription. cAMP improves binding to specific DNA sequences, probably by altering protein conformation. Activates expression of whiB1. The protein is CRP-like cAMP-activated global transcriptional regulator of Mycobacterium tuberculosis (strain CDC 1551 / Oshkosh).